Here is an 87-residue protein sequence, read N- to C-terminus: Small ribosomal subunit protein bS20 (87 aa).

It belongs to the bacterial ribosomal protein bS20 family.

Functionally, binds directly to 16S ribosomal RNA. In Shigella flexneri serotype 5b (strain 8401), this protein is Small ribosomal subunit protein bS20.